The chain runs to 323 residues: Rhazimal reductase 2 (323 aa).

Asp-53 is a binding site for NADP(+). Tyr-58 acts as the Proton donor in catalysis. NADP(+)-binding positions include 167 to 168 (SN), Gln-189, 215 to 220 (WSPLLS), and 289 to 297 (DQIQQIPQR).

This sequence belongs to the aldo/keto reductase family. As to quaternary structure, monomer.

It catalyses the reaction rhazimol + NADP(+) = rhazimal + NADPH + 2 H(+). The protein operates within alkaloid biosynthesis. Functionally, oxidoreductase involved in the biosynthesis of akuammilan monoterpene indole alkaloids (MIAs) natural products, components with various biological properties such as antidiabetic, antibacterial, anti-inflammatory, anticancer, and antimalarial activities. Catalyzes the conversion of rhazimal to rhazimol. In Alstonia scholaris (Dogbane), this protein is Rhazimal reductase 2.